Consider the following 452-residue polypeptide: MDDCIAAISSATGEAGIGIVRMTGEGCADVLDSVFKRANDKADFINRKMTYGHIVDDNEIVDEVLVCYMKAPHTYTREDVVEIYTHGGVVAVRKVLEVLLNNGARLAEAGEFTKRAFLNGRIDLSQAEAIIDMIKAKTDKAYSVSMKQLEGSVNRNIKQLRDKLLDMLSHVEYSINFTEDMQDELDNTPVLNEGKEVLDKLKKLSESANRGRIIRDGINTTIIGKPNVGKSSLLNALLKENRAIVTDIPGTTRDVIEEYIDLDGISLKINDTAGIRDTEDIVEKIGVEKSVSFISDSDLIIAIFDSSREFDDEDRKILDLIRDKKSIVLLNKIDLDGEFDVDENLEGIEVIHTSIKNNEGIEDLENKIIEMFNDGYIEANNDNIITNIRHRDIINKAIKSLESSLHDMEAGVPIDCFEVDLRNAWEILGEITGETVDDDVLNKIFSDFCIGK.

(6S)-5-formyl-5,6,7,8-tetrahydrofolate contacts are provided by R21, E82, and R121. Residues G217–N373 form the TrmE-type G domain. Residue N227 participates in K(+) binding. GTP-binding positions include N227–S232, T246–T252, and D271–G274. Residue S231 participates in Mg(2+) binding. K(+)-binding residues include T246, I248, and T251. T252 contributes to the Mg(2+) binding site. K452 is a binding site for (6S)-5-formyl-5,6,7,8-tetrahydrofolate.

This sequence belongs to the TRAFAC class TrmE-Era-EngA-EngB-Septin-like GTPase superfamily. TrmE GTPase family. As to quaternary structure, homodimer. Heterotetramer of two MnmE and two MnmG subunits. It depends on K(+) as a cofactor.

The protein resides in the cytoplasm. In terms of biological role, exhibits a very high intrinsic GTPase hydrolysis rate. Involved in the addition of a carboxymethylaminomethyl (cmnm) group at the wobble position (U34) of certain tRNAs, forming tRNA-cmnm(5)s(2)U34. This chain is tRNA modification GTPase MnmE, found in Finegoldia magna (strain ATCC 29328 / DSM 20472 / WAL 2508) (Peptostreptococcus magnus).